Here is a 495-residue protein sequence, read N- to C-terminus: Cobyric acid synthase (495 aa).

A GATase cobBQ-type domain is found at 262–445; that stretch reads CLEIAVIRLP…LHGLFDNHRW (184 aa). Cys-340 acts as the Nucleophile in catalysis. The active site involves His-437.

The protein belongs to the CobB/CobQ family. CobQ subfamily.

It functions in the pathway cofactor biosynthesis; adenosylcobalamin biosynthesis. Catalyzes amidations at positions B, D, E, and G on adenosylcobyrinic A,C-diamide. NH(2) groups are provided by glutamine, and one molecule of ATP is hydrogenolyzed for each amidation. The polypeptide is Cobyric acid synthase (Synechococcus sp. (strain JA-3-3Ab) (Cyanobacteria bacterium Yellowstone A-Prime)).